The sequence spans 304 residues: Tyrosine recombinase XerC (304 aa).

The Core-binding (CB) domain maps to 2 to 88 (ENVKNFVKLF…ALRSFYKFLM (87 aa)). Residues 109–294 (RIPKFLYQKE…SKEMLRNTYM (186 aa)) form the Tyr recombinase domain. Catalysis depends on residues Arg149, Lys173, His246, Arg249, and His272. Tyr281 serves as the catalytic O-(3'-phospho-DNA)-tyrosine intermediate.

Belongs to the 'phage' integrase family. XerC subfamily. Forms a cyclic heterotetrameric complex composed of two molecules of XerC and two molecules of XerD.

It is found in the cytoplasm. Site-specific tyrosine recombinase, which acts by catalyzing the cutting and rejoining of the recombining DNA molecules. The XerC-XerD complex is essential to convert dimers of the bacterial chromosome into monomers to permit their segregation at cell division. It also contributes to the segregational stability of plasmids. The chain is Tyrosine recombinase XerC from Bacillus subtilis (strain 168).